Here is a 596-residue protein sequence, read N- to C-terminus: Probable protein phosphatase 2C 26 (596 aa).

Residues 122 to 154 (SGPLDPAVPFSGPLPAKPPKPASSSSRGFSRRF) are disordered. In terms of domain architecture, PPM-type phosphatase spans 177 to 584 (LRRDDGVQWA…DDVTVMVISL (408 aa)). Residues Asp-212, Gly-213, Asp-512, and Asp-575 each coordinate Mn(2+).

This sequence belongs to the PP2C family. The cofactor is Mg(2+). Mn(2+) serves as cofactor.

The enzyme catalyses O-phospho-L-seryl-[protein] + H2O = L-seryl-[protein] + phosphate. The catalysed reaction is O-phospho-L-threonyl-[protein] + H2O = L-threonyl-[protein] + phosphate. In Oryza sativa subsp. japonica (Rice), this protein is Probable protein phosphatase 2C 26.